The sequence spans 468 residues: Neuronal acetylcholine receptor subunit alpha-5 (468 aa).

A signal peptide spans 1–22 (MATRGSGPRAPRLLLLVQLVAG). The Extracellular portion of the chain corresponds to 23 to 254 (RCGLAGAAGG…VIKRLPLFYT (232 aa)). N-linked (GlcNAc...) asparagine glycosylation is found at asparagine 155, asparagine 183, and asparagine 229. Residues cysteine 170 and cysteine 184 are joined by a disulfide bond. Residues cysteine 234 and cysteine 235 are joined by a disulfide bond. The next 3 helical transmembrane spans lie at 255–275 (LFLIIPCIGLSFLTVLVFYLP), 282–302 (ICLCTSVLVSLTVFLLVIEEI), and 317–337 (LVFTMIFVTLSIMVTVFAINI). The Cytoplasmic segment spans residues 338 to 429 (HHRSSSTHNA…WKFIAQVLDR (92 aa)). Residues 430–451 (MFLWTFLFVSIVGSLGLFVPVI) traverse the membrane as a helical segment. The Extracellular segment spans residues 452–468 (YKWANILIPVHIGNANK).

The protein belongs to the ligand-gated ion channel (TC 1.A.9) family. Acetylcholine receptor (TC 1.A.9.1) subfamily. Alpha-5/CHRNA5 sub-subfamily. As to quaternary structure, neuronal AChR that forms heteropentamers composed of two different type of subunits: alpha and non-alpha (beta). CHRNA5/alpha-5 subunit is only able to form functional nAChRs when co-assembled with another alpha subunit, can be combined to CHRNA4/alpha-4 or CHRNA3/alpha-3 and CHRNB4/beta-4 or CHRNB2/beta-2 to give rise to functional receptors. Interacts with LYPD6.

The protein resides in the synaptic cell membrane. The protein localises to the cell membrane. It carries out the reaction Ca(2+)(in) = Ca(2+)(out). The catalysed reaction is K(+)(in) = K(+)(out). It catalyses the reaction Na(+)(in) = Na(+)(out). Activated by a myriad of ligands such as acetylcholine, cytisine, nicotine, choline and epibatidine. Functionally, component of neuronal acetylcholine receptors (nAChRs) that function as pentameric, ligand-gated cation channels with high calcium permeability among other activities. nAChRs are excitatory neurotrasnmitter receptors formed by a collection of nAChR subunits known to mediate synaptic transmission in the nervous system and the neuromuscular junction. Each nAchR subunit confers differential attributes to channel properties, including activation, deactivation and desensitization kinetics, pH sensitivity, cation permeability, and binding to allosteric modulators. Has an accessory rather than functional role and is only able to form functional nAChRs when co-assembled with another beta subunit. Participates in pentameric assemblies along with CHRNA3, CHRNA4, CHRNB2 and CHRNB4. Increases receptor sensitivity to acetylcholine and nicotine when associated with CHRNA4 and CHRNB2. Plays a role in nicotine addiction. The polypeptide is Neuronal acetylcholine receptor subunit alpha-5 (CHRNA5) (Pan troglodytes (Chimpanzee)).